A 266-amino-acid chain; its full sequence is Protein-ADP-ribose hydrolase (266 aa).

The Macro domain maps to 74 to 265 (TDLKDLKPIK…LYKEAFNRDA (192 aa)). Positions 93, 94, and 107 each coordinate ADP-D-ribose. Zn(2+)-binding residues include Cys-113, His-118, and Cys-120. ADP-D-ribose-binding residues include Cys-120, Ile-121, Asp-122, Ser-212, Thr-213, Gly-214, and Phe-216.

Belongs to the MacroD-type family. Zn-Macro subfamily. It depends on Zn(2+) as a cofactor.

It catalyses the reaction 4-O-(ADP-D-ribosyl)-L-aspartyl-[protein] + H2O = L-aspartyl-[protein] + ADP-D-ribose + H(+). ADP-ribosylhydrolase that specifically reverses the SirTM-mediated mono-ADP-ribosylation at an asparatate residue of GcvH-L, by releasing ADP-ribose from the target protein. May play a role in the regulation of the response to host-induced oxidative stress. The protein is Protein-ADP-ribose hydrolase of Staphylococcus aureus (strain COL).